The sequence spans 356 residues: Phenylalanine--tRNA ligase alpha subunit (356 aa).

Mg(2+) is bound at residue Glu-258.

It belongs to the class-II aminoacyl-tRNA synthetase family. Phe-tRNA synthetase alpha subunit type 1 subfamily. In terms of assembly, tetramer of two alpha and two beta subunits. The cofactor is Mg(2+).

It localises to the cytoplasm. It catalyses the reaction tRNA(Phe) + L-phenylalanine + ATP = L-phenylalanyl-tRNA(Phe) + AMP + diphosphate + H(+). This is Phenylalanine--tRNA ligase alpha subunit from Macrococcus caseolyticus (strain JCSC5402) (Macrococcoides caseolyticum).